The chain runs to 527 residues: T-complex protein 1 subunit delta (527 aa).

This sequence belongs to the TCP-1 chaperonin family. As to quaternary structure, heterooligomeric complex of about 850 to 900 kDa that forms two stacked rings, 12 to 16 nm in diameter.

The protein resides in the cytoplasm. In terms of biological role, molecular chaperone; assists the folding of proteins upon ATP hydrolysis. Known to play a role, in vitro, in the folding of actin and tubulin. This is T-complex protein 1 subunit delta (CCT4) from Yarrowia lipolytica (strain CLIB 122 / E 150) (Yeast).